The chain runs to 304 residues: MIHPEQVADMLRPTTSTTSSHVPGPVPTVVPTPTEYQTLGETGHRTLWVTFALMVLSSGIFALLSWNVPTSKRLFHVITTLITVVASLSYFAMATGHATTFNCDTAWDHHKHVPDTSHQVCRQVFWGRYVDWALTTPLLLLELCLLAGVDGAHTLMAIVADVIMVLCGLFAALGEGGNTAQKWGWYTIGCFSYLFVIWHVALHGSRTVTAKGRGVSRLFTGLAVFALLLWTAYPIIWGIAGGARRTNVDTEILIYTVLDLLAKPVFGFWLLLSHRAMPETNIDLPGYWSHGLATEGRIRIGEED.

Over Met1 to Arg45 the chain is Extracellular. The chain crosses the membrane as a helical span at residues Thr46–Trp66. The chain crosses the membrane as a helical span at residues Leu74–Ala94. A helical membrane pass occupies residues Tyr129 to Val149. A helical transmembrane segment spans residues Thr154–Gly174. The chain crosses the membrane as a helical span at residues Trp183–His203. The chain crosses the membrane as a helical span at residues Phe219–Ile239. A helical transmembrane segment spans residues Ile252 to Leu272. N6-(retinylidene)lysine is present on Lys263. Over Ser273–Asp304 the chain is Cytoplasmic.

This sequence belongs to the archaeal/bacterial/fungal opsin family. In terms of processing, binds all-trans retinal via a protonated Schiff base linkage.

It is found in the membrane. Could facilitate a sensory photoresponse. The sequence is that of Opsin-1 (nop-1) from Neurospora crassa (strain ATCC 24698 / 74-OR23-1A / CBS 708.71 / DSM 1257 / FGSC 987).